Reading from the N-terminus, the 290-residue chain is 33 kDa chaperonin (290 aa).

Disulfide bonds link Cys235-Cys237 and Cys268-Cys271.

This sequence belongs to the HSP33 family. In terms of processing, under oxidizing conditions two disulfide bonds are formed involving the reactive cysteines. Under reducing conditions zinc is bound to the reactive cysteines and the protein is inactive.

It is found in the cytoplasm. Functionally, redox regulated molecular chaperone. Protects both thermally unfolding and oxidatively damaged proteins from irreversible aggregation. Plays an important role in the bacterial defense system toward oxidative stress. The sequence is that of 33 kDa chaperonin from Streptococcus pyogenes serotype M5 (strain Manfredo).